The primary structure comprises 171 residues: MMLVLTTLIFSFSASIAYAQSGCSVSDPLDALKAFKDGAGTFLLQKSTDPQARDCLKGTPNGNRDGNTLPVTMTYKDDSKWVSLNWMFTLEGANIVATLEGKRKQRGELVYDVQSHDCHITKLSSGVYQQWQSNGSADDKDIKCCDEKFKELTSGIDYTKPQEKGCETSAK.

The first 15 residues, 1–15 (MMLVLTTLIFSFSAS), serve as a signal peptide directing secretion. 3 disulfide bridges follow: C23-C144, C55-C166, and C118-C145.

The protein belongs to the calycin superfamily. Lipocalin family. Post-translationally, the N-terminus is blocked. Expressed in salivary glands.

It localises to the secreted. Its function is as follows. Tick salivary platelet aggregation inhibitor that plays an important part in the anti-hemostatic strategy of ticks. Acts by scavenging thromboxane A2 (TXA2), a potent inducer of platelet aggregation and blood vessel constriction. As a consequence, is a specific inhibitor of collagen-induced platelet aggregation. In addition, it also acts as a potent inhibitor of TXA2-mediated vasoconstriction. Has also been found to bind leukotriene B4 (LTB4) (which also derives from arachidonic acid, as TXA2) with affinities in the nanomolar range. It does not interact with complement protein C5. This chain is Moubatin, found in Ornithodoros moubata (Soft tick).